The chain runs to 564 residues: Juvenile hormone esterase (564 aa).

The N-terminal stretch at Met1 to Ala19 is a signal peptide. Asn81 carries an N-linked (GlcNAc...) asparagine glycan. A disulfide bridge links Cys89 with Cys109. Residue Asn180 is glycosylated (N-linked (GlcNAc...) asparagine). Catalysis depends on Ser220, which acts as the Acyl-ester intermediate. The active-site Charge relay system is the Glu351. N-linked (GlcNAc...) asparagine glycosylation is present at Asn402. Catalysis depends on His465, which acts as the Charge relay system. A glycan (N-linked (GlcNAc...) asparagine) is linked at Asn515.

This sequence belongs to the type-B carboxylesterase/lipase family.

It catalyses the reaction juvenile hormone I + H2O = juvenile hormone I carboxylate + methanol + H(+). The enzyme catalyses juvenile hormone III + H2O = juvenile hormone III carboxylate + methanol + H(+). Functionally, JH esterase plays a crucial role in the decrease of JH activity in lepidopteran insects, by hydrolyzing the methyl ester of JH. It is also involved in the transport of JH. The sequence is that of Juvenile hormone esterase from Heliothis virescens (Tobacco budworm moth).